A 134-amino-acid polypeptide reads, in one-letter code: MIYMLDTNICVYAINKHPDSYYNNLELLAKNNTIAISSIVLAELQYGVSKSKKKEQNQSKLDIFLSRLEIIDFSAKCTFYYGELRTELEQKGLIIGNNDLLIASHAIAENATLVTNNIKEFKRIPNLILENWDK.

One can recognise a PINc domain in the interval 3–124; that stretch reads YMLDTNICVY…TNNIKEFKRI (122 aa). Aspartate 6 provides a ligand contact to Mg(2+).

It belongs to the PINc/VapC protein family. Forms complexes with VapB2; probably VapC2(4):VapB2(2) in the absence of DNA, and VapC2(4):VapB2(4) in the presence of DNA. Crystallizes as heterodimers with stoichiometry VapC2(4):VapB2(4) in the presence of its probable promoter DNA. The heterodimers are in contact via alternative VapC-VapC and VapB-VapB interactions. This subunit does not contact DNA. Mg(2+) serves as cofactor.

In terms of biological role, toxic component of a type II toxin-antitoxin (TA) system. Has ssRNase activity. Upon expression in E.coli or S.cerevisiae inhibits growth in liquid culture; in S.cerevisiae its expression leads to apoptosis-like characteristics. Rapidly induces apoptosis (within 2 hours) upon microinjection into mouse fibroblasts (L929 line); pretreatment of cells with dexamethasone protects them. Probably contributes to host cell death if bacterial cell lysis occurs during host infection. Its toxic effect is neutralized by coexpression with cognate antitoxin VapB2, its RNase activity is partially inhibited in vitro by VapB2. The sequence is that of Ribonuclease VapC2 from Rickettsia felis (strain ATCC VR-1525 / URRWXCal2) (Rickettsia azadi).